The sequence spans 181 residues: Adenine phosphoribosyltransferase (181 aa).

This sequence belongs to the purine/pyrimidine phosphoribosyltransferase family. Homodimer.

The protein resides in the cytoplasm. It carries out the reaction AMP + diphosphate = 5-phospho-alpha-D-ribose 1-diphosphate + adenine. It participates in purine metabolism; AMP biosynthesis via salvage pathway; AMP from adenine: step 1/1. Catalyzes a salvage reaction resulting in the formation of AMP, that is energically less costly than de novo synthesis. In Vibrio campbellii (strain ATCC BAA-1116), this protein is Adenine phosphoribosyltransferase.